Reading from the N-terminus, the 242-residue chain is MAQVSMRDMLQAGVHFGHQTRYWNPKMKPFIYGPRNGVHIINLEKTVPMFNGALAELTRIASNNGKILFVGTKRAATEAVQAAALDCQQYYVNHRWLGGMLTNWKTVRQSIKRLKDLETQSQDGTFDKLTKKEALVRTREMEKLELSLGGIKDMAGLPDAIFVIGADYEHIAIKEANNLGIPVFAVVDTNSNPDGIDFVIPGNDDATRAIQLYVTAAAAAVKEGRSQQTATEEKFAEEVAAE.

It belongs to the universal ribosomal protein uS2 family.

This chain is Small ribosomal subunit protein uS2, found in Mannheimia succiniciproducens (strain KCTC 0769BP / MBEL55E).